The chain runs to 333 residues: Ketol-acid reductoisomerase (NADP(+)) (333 aa).

The region spanning 6–186 is the KARI N-terminal Rossmann domain; the sequence is TRVYTECDAD…GALRAGAIQT (181 aa). NADP(+)-binding positions include 29–32, K52, S55, S57, and 87–90; these read YGSQ and DPAQ. H112 is a catalytic residue. Residue G138 participates in NADP(+) binding. Positions 187 to 332 constitute a KARI C-terminal knotted domain; it reads TFTEETETDL…ARLRALFSWS (146 aa). Residues D195, E199, E231, and E235 each contribute to the Mg(2+) site. S256 contributes to the substrate binding site.

The protein belongs to the ketol-acid reductoisomerase family. The cofactor is Mg(2+).

The catalysed reaction is (2R)-2,3-dihydroxy-3-methylbutanoate + NADP(+) = (2S)-2-acetolactate + NADPH + H(+). It carries out the reaction (2R,3R)-2,3-dihydroxy-3-methylpentanoate + NADP(+) = (S)-2-ethyl-2-hydroxy-3-oxobutanoate + NADPH + H(+). It participates in amino-acid biosynthesis; L-isoleucine biosynthesis; L-isoleucine from 2-oxobutanoate: step 2/4. It functions in the pathway amino-acid biosynthesis; L-valine biosynthesis; L-valine from pyruvate: step 2/4. Its function is as follows. Involved in the biosynthesis of branched-chain amino acids (BCAA). Catalyzes an alkyl-migration followed by a ketol-acid reduction of (S)-2-acetolactate (S2AL) to yield (R)-2,3-dihydroxy-isovalerate. In the isomerase reaction, S2AL is rearranged via a Mg-dependent methyl migration to produce 3-hydroxy-3-methyl-2-ketobutyrate (HMKB). In the reductase reaction, this 2-ketoacid undergoes a metal-dependent reduction by NADPH to yield (R)-2,3-dihydroxy-isovalerate. This is Ketol-acid reductoisomerase (NADP(+)) from Tropheryma whipplei (strain Twist) (Whipple's bacillus).